The primary structure comprises 406 residues: Enoyl-[acyl-carrier-protein] reductase [NADH] (406 aa).

Residues 48-53 (GASTGF), 74-75 (FE), 111-112 (DA), and 140-141 (IA) contribute to the NAD(+) site. Residue Y226 participates in substrate binding. The Proton donor role is filled by Y236. Residues K245 and 275 to 277 (LVT) each bind NAD(+).

The protein belongs to the TER reductase family. As to quaternary structure, monomer.

The catalysed reaction is a 2,3-saturated acyl-[ACP] + NAD(+) = a (2E)-enoyl-[ACP] + NADH + H(+). Its pathway is lipid metabolism; fatty acid biosynthesis. Its function is as follows. Involved in the final reduction of the elongation cycle of fatty acid synthesis (FAS II). Catalyzes the reduction of a carbon-carbon double bond in an enoyl moiety that is covalently linked to an acyl carrier protein (ACP). The chain is Enoyl-[acyl-carrier-protein] reductase [NADH] from Coxiella burnetii (strain Dugway 5J108-111).